A 158-amino-acid polypeptide reads, in one-letter code: C-type lectin (158 aa).

Residues 1 to 23 (MWQFTVVSLGWLAVFLSLSGAKG) form the signal peptide. 3 cysteine pairs are disulfide-bonded: C26–C37, C54–C154, and C129–C146. The C-type lectin domain occupies 33–155 (RNGVCNKLFP…CASLHPFICQ (123 aa)). The Mannose-binding signature appears at 119–121 (EPN). Positions 127, 142, and 143 each coordinate Ca(2+).

This sequence belongs to the true venom lectin family. In terms of tissue distribution, expressed by the venom gland.

It localises to the secreted. Mannose-binding lectin which recognizes specific carbohydrate structures and agglutinates a variety of animal cells by binding to cell-surface glycoproteins and glycolipids. May be a calcium-dependent lectin. This Cerberus rynchops (Dog-faced water snake) protein is C-type lectin.